Here is a 481-residue protein sequence, read N- to C-terminus: MASGALRGLAVAGGGESSDSEDDGWEIGYLDRVSQKLKGPLPGEEKSETFKKALTTGDISLVQELLDSGISVDSSFRYGWTPLMYAASIANVELVRVLLNRGANASFDKDKQTILITACSARGSEEQILKCVELLLSRNADPNIACRRLMTPIMYAARDGHPQVVALLVAHGAEVNAQDENGYTALTWAARQGHKNVVLKLLELGANKMLQTKDGKIPSEIAKRNKHLEIFNFLSLTLNPLEGNLKQLTKEETICKLLTTDSDKEKDHIFSSYTAFGDLEIFLHGLGLEHMTDLLKEKDITLRHLLTMRKDEFTKNGITSKDQEKILSALKELEVEEIKFGELPEVAKLEISGDEFLNFLLKLNKQCGHLITAVQNIITELPVNSHKIVLEWASPRNFTSVCEELVSNVEDLSEEVHKLKDLIQKLQNERENDPTHIPLMEEVSTWNSRILKRTAIAVCGFGFLLFICKLTVQRRYPNICF.

Residues 1–10 (MASGALRGLA) show a composition bias toward low complexity. The interval 1–23 (MASGALRGLAVAGGGESSDSEDD) is disordered. 3 positions are modified to phosphoserine: Ser17, Ser18, and Ser20. ANK repeat units lie at residues 45-74 (EKSE…SVDS), 78-107 (YGWT…NASF), 110-144 (DKQT…DPNI), 148-177 (RLMT…EVNA), 181-210 (NGYT…NKML), and 214-243 (DGKI…PLEG). An SAM domain is found at 272-334 (SYTAFGDLEI…KILSALKELE (63 aa)).

As to quaternary structure, interacts with DDX4, PIWIL1, RANBP9 and TDRD1.

Its subcellular location is the cytoplasm. Functionally, plays a central role during spermatogenesis by repressing transposable elements and preventing their mobilization, which is essential for the germline integrity. Acts via the piRNA metabolic process, which mediates the repression of transposable elements during meiosis by forming complexes composed of piRNAs and Piwi proteins and governs the methylation and subsequent repression of transposons. Its association with pi-bodies suggests a participation in the primary piRNAs metabolic process. Required prior to the pachytene stage to facilitate the production of multiple types of piRNAs, including those associated with repeats involved in the regulation of retrotransposons. May act by mediating protein-protein interactions during germ cell maturation. The chain is Ankyrin repeat, SAM and basic leucine zipper domain-containing protein 1 (ASZ1) from Eulemur macaco macaco (Black lemur).